The chain runs to 248 residues: Pyridoxine 5'-phosphate synthase (248 aa).

Asn10 lines the 3-amino-2-oxopropyl phosphate pocket. 1-deoxy-D-xylulose 5-phosphate is bound at residue 12–13 (DH). Arg21 is a binding site for 3-amino-2-oxopropyl phosphate. Residue His46 is the Proton acceptor of the active site. 1-deoxy-D-xylulose 5-phosphate-binding residues include Arg48 and His53. Glu73 functions as the Proton acceptor in the catalytic mechanism. Thr103 lines the 1-deoxy-D-xylulose 5-phosphate pocket. His194 serves as the catalytic Proton donor. 3-amino-2-oxopropyl phosphate contacts are provided by residues Gly195 and 216–217 (GH).

Belongs to the PNP synthase family. In terms of assembly, homooctamer; tetramer of dimers.

Its subcellular location is the cytoplasm. It catalyses the reaction 3-amino-2-oxopropyl phosphate + 1-deoxy-D-xylulose 5-phosphate = pyridoxine 5'-phosphate + phosphate + 2 H2O + H(+). Its pathway is cofactor biosynthesis; pyridoxine 5'-phosphate biosynthesis; pyridoxine 5'-phosphate from D-erythrose 4-phosphate: step 5/5. In terms of biological role, catalyzes the complicated ring closure reaction between the two acyclic compounds 1-deoxy-D-xylulose-5-phosphate (DXP) and 3-amino-2-oxopropyl phosphate (1-amino-acetone-3-phosphate or AAP) to form pyridoxine 5'-phosphate (PNP) and inorganic phosphate. The sequence is that of Pyridoxine 5'-phosphate synthase from Legionella pneumophila (strain Lens).